The chain runs to 310 residues: Tagatose-6-phosphate kinase (310 aa).

The protein belongs to the carbohydrate kinase PfkB family. LacC subfamily.

It carries out the reaction D-tagatofuranose 6-phosphate + ATP = D-tagatofuranose 1,6-bisphosphate + ADP + H(+). The protein operates within carbohydrate metabolism; D-tagatose 6-phosphate degradation; D-glyceraldehyde 3-phosphate and glycerone phosphate from D-tagatose 6-phosphate: step 1/2. The protein is Tagatose-6-phosphate kinase of Staphylococcus aureus (strain MRSA252).